Here is a 178-residue protein sequence, read N- to C-terminus: MSATVRILGIDPGSRVTGFGIIDVRGRDHFYVASGCIKTPPDAPLADRIAVIVRHIGEVVAVYKPQQAAVEQVFVNVNPASTLMLGQARGAALAALVSHKLPVSEYTALQVKQAVVGKGKAAKEQVQHMVVQMLGLSGTPQADAADGLAVALTHALRNHGLAAKLNPSGMQVKRGRFQ.

Active-site residues include D11, E71, and D143. 3 residues coordinate Mg(2+): D11, E71, and D143.

The protein belongs to the RuvC family. In terms of assembly, homodimer which binds Holliday junction (HJ) DNA. The HJ becomes 2-fold symmetrical on binding to RuvC with unstacked arms; it has a different conformation from HJ DNA in complex with RuvA. In the full resolvosome a probable DNA-RuvA(4)-RuvB(12)-RuvC(2) complex forms which resolves the HJ. The cofactor is Mg(2+).

The protein localises to the cytoplasm. It carries out the reaction Endonucleolytic cleavage at a junction such as a reciprocal single-stranded crossover between two homologous DNA duplexes (Holliday junction).. The RuvA-RuvB-RuvC complex processes Holliday junction (HJ) DNA during genetic recombination and DNA repair. Endonuclease that resolves HJ intermediates. Cleaves cruciform DNA by making single-stranded nicks across the HJ at symmetrical positions within the homologous arms, yielding a 5'-phosphate and a 3'-hydroxyl group; requires a central core of homology in the junction. The consensus cleavage sequence is 5'-(A/T)TT(C/G)-3'. Cleavage occurs on the 3'-side of the TT dinucleotide at the point of strand exchange. HJ branch migration catalyzed by RuvA-RuvB allows RuvC to scan DNA until it finds its consensus sequence, where it cleaves and resolves the cruciform DNA. This is Crossover junction endodeoxyribonuclease RuvC from Neisseria meningitidis serogroup C / serotype 2a (strain ATCC 700532 / DSM 15464 / FAM18).